Consider the following 591-residue polypeptide: Probable lysosomal cobalamin transporter (591 aa).

A run of 5 helical transmembrane segments spans residues 8-28 (LIWV…STFV), 39-59 (AAVT…VLLI), 95-115 (IVYY…IPFT), 144-164 (WTLG…FVPF), and 198-218 (FLIT…MALL). Residues 238–266 (TASQLETNRERQRQLEGRNEGREGGLDSR) form a disordered region. The segment covering 244–266 (TNRERQRQLEGRNEGREGGLDSR) has biased composition (basic and acidic residues). 4 consecutive transmembrane segments (helical) span residues 315 to 335 (LIGG…MLIT), 378 to 398 (VLFL…IATA), 422 to 442 (MATV…AMVV), and 509 to 529 (FFGI…LIVF).

Belongs to the LIMR family. LMBRD1 subfamily.

The protein resides in the lysosome membrane. In terms of biological role, probable lysosomal cobalamin transporter. Required to export cobalamin from lysosomes allowing its conversion to cofactors. The protein is Probable lysosomal cobalamin transporter of Pyrenophora tritici-repentis (strain Pt-1C-BFP) (Wheat tan spot fungus).